Consider the following 187-residue polypeptide: Aminodeoxychorismate synthase component 2 (187 aa).

One can recognise a Glutamine amidotransferase type-1 domain in the interval 1–187; it reads MILLIDNYDS…HQLLANFLHR (187 aa). Residues C79, H168, and E170 contribute to the active site.

In terms of assembly, monomer. Heterodimer consisting of two non-identical subunits: a glutamine amidotransferase subunit (PabA) and a aminodeoxychorismate synthase subunit (PabB).

The enzyme catalyses chorismate + L-glutamine = 4-amino-4-deoxychorismate + L-glutamate. It participates in cofactor biosynthesis; tetrahydrofolate biosynthesis; 4-aminobenzoate from chorismate: step 1/2. Its activity is regulated as follows. Inhibited by 6-diazo-5-oxo-L-norleucine (DON). The inhibition is competitive with glutamine, but uncompetitive with chorismate. Functionally, part of a heterodimeric complex that catalyzes the two-step biosynthesis of 4-amino-4-deoxychorismate (ADC), a precursor of p-aminobenzoate (PABA) and tetrahydrofolate. In the first step, a glutamine amidotransferase (PabA) generates ammonia as a substrate that, along with chorismate, is used in the second step, catalyzed by aminodeoxychorismate synthase (PabB) to produce ADC. PabA converts glutamine into glutamate only in the presence of stoichiometric amounts of PabB. The chain is Aminodeoxychorismate synthase component 2 from Escherichia coli (strain K12).